Reading from the N-terminus, the 412-residue chain is Proteasome-activating nucleotidase 2 (412 aa).

The stretch at Leu28–Ser74 forms a coiled coil. ATP contacts are provided by residues Gly196–Met201 and His335. The interval Asp409 to Tyr412 is docks into pockets in the proteasome alpha-ring to cause gate opening.

It belongs to the AAA ATPase family. In terms of assembly, homohexamer. The hexameric complex has a two-ring architecture resembling a top hat that caps the 20S proteasome core at one or both ends. Upon ATP-binding, the C-terminus of PAN interacts with the alpha-rings of the proteasome core by binding to the intersubunit pockets.

The protein resides in the cytoplasm. In terms of biological role, ATPase which is responsible for recognizing, binding, unfolding and translocation of substrate proteins into the archaeal 20S proteasome core particle. Is essential for opening the gate of the 20S proteasome via an interaction with its C-terminus, thereby allowing substrate entry and access to the site of proteolysis. Thus, the C-termini of the proteasomal ATPase function like a 'key in a lock' to induce gate opening and therefore regulate proteolysis. Unfolding activity requires energy from ATP hydrolysis, whereas ATP binding alone promotes ATPase-20S proteasome association which triggers gate opening, and supports translocation of unfolded substrates. The chain is Proteasome-activating nucleotidase 2 from Haloferax volcanii (strain ATCC 29605 / DSM 3757 / JCM 8879 / NBRC 14742 / NCIMB 2012 / VKM B-1768 / DS2) (Halobacterium volcanii).